Consider the following 70-residue polypeptide: Conotoxin ba3a (70 aa).

A signal peptide spans 1 to 20 (MLKIGVMLSIILVLFPLATL). Residues 21–55 (QLVAERPAAERYAENKQDLNPDERRNYLVDLGVER) constitute a propeptide that is removed on maturation.

As to expression, expressed by the venom duct.

The protein resides in the secreted. In Conus bayani (Bayan's cone), this protein is Conotoxin ba3a.